We begin with the raw amino-acid sequence, 373 residues long: Core trichothecene cluster (CTC) protein 14 (373 aa).

The protein belongs to the TRI14 family.

Its function is as follows. Part of the core gene cluster that mediates the biosynthesis of trichothecenes, a very large family of chemically related bicyclic sesquiterpene compounds acting as mycotoxins, including T2-toxin. The biosynthesis of trichothecenes begins with the cyclization of farnesyl diphosphate to trichodiene and is catalyzed by the trichodiene synthase TRI5. Trichodiene undergoes a series of oxygenations catalyzed by the cytochrome P450 monooxygenase TRI4. TRI4 controls the addition of four oxygens at C-2, C-3, C-11, and the C-12, C-13-epoxide to form the intermediate isotrichotriol. Isotrichotriol then undergoes a non-enzymatic isomerization and cyclization to form isotrichodermol. During this process, the oxygen at the C-2 position becomes the pyran ring oxygen and the hydroxyl group at C-11 is lost. More complex type A trichothecenes are built by modifying isotrichodermol through a series of paired hydroxylation and acetylation or acylation steps. Isotrichodermol is converted to isotrichodermin by the acetyltransferase TRI101. TRI101 encodes a C-3 transacetylase that acts as a self-protection or resistance factor during biosynthesis and that the presence of a free C-3 hydroxyl group is a key component of Fusarium trichothecene phytotoxicity. A second hydroxyl group is added to C-15 by the trichothecene C-15 hydroxylase TRI11, producing 15-decalonectrin, which is then acetylated by TRI3, producing calonectrin. A third hydroxyl group is added at C-4 by the cytochrome P450 monooxygenase TRI13, converting calonectrin to 3,15-diacetoxyspirpenol, which is subsequently acetylated bythe acetyltransferase TRI7. A fourth hydroxyl group is added to C-8 by the cytochrome P450 monooxygenase TRI1, followed by the addition of an isovaleryl moiety by TRI16. Finally, the acetyl group is removed from the C-3 position by the trichothecene C-3 esterase TRI8 to produce T-2 toxin. The sequence is that of Core trichothecene cluster (CTC) protein 14 from Fusarium sporotrichioides.